Consider the following 156-residue polypeptide: Photosystem I reaction center subunit XI (156 aa).

A run of 2 helical transmembrane segments spans residues 75 to 95 and 128 to 148; these read GGLL…SLYA and FFIG…ALYF.

This sequence belongs to the PsaL family.

Its subcellular location is the cellular thylakoid membrane. The polypeptide is Photosystem I reaction center subunit XI (Crocosphaera subtropica (strain ATCC 51142 / BH68) (Cyanothece sp. (strain ATCC 51142))).